The chain runs to 512 residues: GMP synthase [glutamine-hydrolyzing] (512 aa).

Positions 5-195 (GIVILDFGSQ…IFGIAKAEKN (191 aa)) constitute a Glutamine amidotransferase type-1 domain. Cys-82 acts as the Nucleophile in catalysis. Residues His-169 and Glu-171 contribute to the active site. Residues 196–387 (WSMENYIEST…LGIPDYMVDR (192 aa)) enclose the GMPS ATP-PPase domain. Residue 223-229 (SGGVDSS) coordinates ATP.

Homodimer.

It catalyses the reaction XMP + L-glutamine + ATP + H2O = GMP + L-glutamate + AMP + diphosphate + 2 H(+). It participates in purine metabolism; GMP biosynthesis; GMP from XMP (L-Gln route): step 1/1. Its function is as follows. Catalyzes the synthesis of GMP from XMP. This is GMP synthase [glutamine-hydrolyzing] from Fusobacterium nucleatum subsp. nucleatum (strain ATCC 25586 / DSM 15643 / BCRC 10681 / CIP 101130 / JCM 8532 / KCTC 2640 / LMG 13131 / VPI 4355).